The chain runs to 194 residues: Metalloproteinase inhibitor 2 (194 aa).

Cysteine 1 provides a ligand contact to Zn(2+). 2 involved in metalloproteinase-binding regions span residues 1 to 4 (CSCS) and 69 to 70 (SA). 6 cysteine pairs are disulfide-bonded: cysteine 1/cysteine 72, cysteine 3/cysteine 101, cysteine 13/cysteine 126, cysteine 128/cysteine 175, cysteine 133/cysteine 138, and cysteine 146/cysteine 167. The region spanning 1 to 126 (CSCSPVHPQQ…SLNHRYQMGC (126 aa)) is the NTR domain.

The protein belongs to the protease inhibitor I35 (TIMP) family. As to quaternary structure, interacts (via the C-terminal) with MMP2 (via the C-terminal PEX domain); the interaction inhibits the MMP2 activity. In terms of processing, the activity of TIMP2 is dependent on the presence of disulfide bonds.

It localises to the secreted. Its function is as follows. Complexes with metalloproteinases (such as collagenases) and irreversibly inactivates them by binding to their catalytic zinc cofactor. This Oryctolagus cuniculus (Rabbit) protein is Metalloproteinase inhibitor 2 (TIMP2).